The following is a 95-amino-acid chain: UPF0213 protein YPK_3712 (95 aa).

The GIY-YIG domain maps to 4–79 (SLWHLYLLRT…KQLSKQQKEK (76 aa)).

It belongs to the UPF0213 family.

This Yersinia pseudotuberculosis serotype O:3 (strain YPIII) protein is UPF0213 protein YPK_3712.